The sequence spans 332 residues: MERHTTLGEFIIENQKDFPYAKGELSALLSSIRLAGKVVNQQINKAGLAEILGKAGKENVQGESQAKLDVLANEIFVSTLRNRGEICGLASEELEDYLVFDEEMHKNAEYIVLIDPLDGSSNIDVDITVGTIFSIYRRISKKGTPATLEDFLQPGINQVAAGYLIYGTSTILVYTTGNGVNGFTFDPGIGSFFLSHSDIKFPKKGNTYSVNEGNYVHFPQGIKKYIKWVQELNEEENRPFTSRYTGSLVADFHRNMLLGGIYLYPQGTTAPKGKLRLLYECNPMAFLAEQAGGKATDGSRRIMELQPQELHERAPFICGNKEMVEKAEEFMQ.

Mg(2+) contacts are provided by E92, D115, L117, and D118. Substrate-binding positions include 118–121 (DGSS), N211, Y244, 262–264 (YLY), and K274. E280 lines the Mg(2+) pocket.

It belongs to the FBPase class 1 family. Homotetramer. Mg(2+) serves as cofactor.

The protein resides in the cytoplasm. The catalysed reaction is beta-D-fructose 1,6-bisphosphate + H2O = beta-D-fructose 6-phosphate + phosphate. The protein operates within carbohydrate biosynthesis; gluconeogenesis. The sequence is that of Fructose-1,6-bisphosphatase class 1 1 from Christiangramia forsetii (strain DSM 17595 / CGMCC 1.15422 / KT0803) (Gramella forsetii).